A 148-amino-acid polypeptide reads, in one-letter code: Large ribosomal subunit protein bL9 (148 aa).

The protein belongs to the bacterial ribosomal protein bL9 family.

Functionally, binds to the 23S rRNA. The polypeptide is Large ribosomal subunit protein bL9 (Geobacter sulfurreducens (strain ATCC 51573 / DSM 12127 / PCA)).